The primary structure comprises 397 residues: Acetate kinase (397 aa).

A Mg(2+)-binding site is contributed by Asn8. Lys15 lines the ATP pocket. Arg89 is a binding site for substrate. Asp146 functions as the Proton donor/acceptor in the catalytic mechanism. Residues 206 to 210 (HLGNG), 280 to 282 (DMR), and 328 to 332 (GVGEN) contribute to the ATP site. Residue Glu382 participates in Mg(2+) binding.

This sequence belongs to the acetokinase family. As to quaternary structure, homodimer. It depends on Mg(2+) as a cofactor. The cofactor is Mn(2+).

The protein resides in the cytoplasm. The enzyme catalyses acetate + ATP = acetyl phosphate + ADP. Its pathway is metabolic intermediate biosynthesis; acetyl-CoA biosynthesis; acetyl-CoA from acetate: step 1/2. Catalyzes the formation of acetyl phosphate from acetate and ATP. Can also catalyze the reverse reaction. This is Acetate kinase from Leifsonia xyli subsp. xyli (strain CTCB07).